A 444-amino-acid polypeptide reads, in one-letter code: Cell wall mannoprotein PST1 (444 aa).

Residues 1 to 19 form the signal peptide; sequence MQLHSLIASTALLITSALA. Asn57, Asn76, Asn83, Asn86, Asn196, Asn210, Asn228, Asn235, Asn242, Asn263, Asn268, Asn280, Asn292, Asn305, and Asn329 each carry an N-linked (GlcNAc...) asparagine glycan. Composition is skewed to low complexity over residues 359–381 and 395–417; these read SVKL…SKSS and KAAA…KSSK. The segment at 359–418 is disordered; it reads SVKLSSTSKSQSSQTTAKVSKSSSKAEEKKFTSGDIKAAASASSVSSSSASSSSSKSSKG. Asn419 is lipidated: GPI-anchor amidated asparagine. Positions 420–444 are cleaved as a propeptide — removed in mature form; it reads AAIMAPIGQTTPLVGLLTAIIMSIM.

This sequence belongs to the SPS2 family. Extensively N- and O-mannosylated.

It is found in the cell membrane. Its subcellular location is the secreted. It localises to the cell wall. Has a partially redundant function to ECM33 in cell wall integrity. May be involved in a repair mechanism activated in response to cell wall damage. The polypeptide is Cell wall mannoprotein PST1 (PST1) (Saccharomyces cerevisiae (strain YJM789) (Baker's yeast)).